The sequence spans 461 residues: Cysteine--tRNA ligase (461 aa).

A Zn(2+)-binding site is contributed by cysteine 28. A 'HIGH' region motif is present at residues 30–40 (ITVYDLCHIGH). 3 residues coordinate Zn(2+): cysteine 209, histidine 234, and glutamate 238. Residues 266–270 (KMSKS) carry the 'KMSKS' region motif. Lysine 269 contributes to the ATP binding site.

The protein belongs to the class-I aminoacyl-tRNA synthetase family. As to quaternary structure, monomer. Zn(2+) serves as cofactor.

The protein localises to the cytoplasm. The catalysed reaction is tRNA(Cys) + L-cysteine + ATP = L-cysteinyl-tRNA(Cys) + AMP + diphosphate. The sequence is that of Cysteine--tRNA ligase from Escherichia coli (strain K12 / MC4100 / BW2952).